We begin with the raw amino-acid sequence, 130 residues long: MYRAVTRQIEVLVEPEFLPERSSPEKQQFFWAYSITIVNGGPDSVQLKTRHWVITDGFGQQQEVRGEGVVGEQPVIGPGERYEYTSGVPLTTSSGFMTGSYQMVTEDGEAFDLAIPLFSLDSPDIRRTLN.

Residues 3-127 (RAVTRQIEVL…FSLDSPDIRR (125 aa)) enclose the ApaG domain.

This is Protein ApaG from Afipia carboxidovorans (strain ATCC 49405 / DSM 1227 / KCTC 32145 / OM5) (Oligotropha carboxidovorans).